A 347-amino-acid chain; its full sequence is Protein RecA (347 aa).

65 to 72 (GPESSGKT) is a binding site for ATP.

The protein belongs to the RecA family.

The protein resides in the cytoplasm. Its function is as follows. Can catalyze the hydrolysis of ATP in the presence of single-stranded DNA, the ATP-dependent uptake of single-stranded DNA by duplex DNA, and the ATP-dependent hybridization of homologous single-stranded DNAs. It interacts with LexA causing its activation and leading to its autocatalytic cleavage. The protein is Protein RecA of Stutzerimonas stutzeri (Pseudomonas stutzeri).